The sequence spans 1103 residues: Isoleucine--tRNA ligase (1103 aa).

Positions 1–25 (MSENVYPKANEGGETAHVAPNPSFP) are disordered. Positions 65–75 (PFANGLPHYGH) match the 'HIGH' region motif. A 'KMSKS' region motif is present at residues 649 to 653 (KMSKH). ATP is bound at residue K652.

Belongs to the class-I aminoacyl-tRNA synthetase family. IleS type 2 subfamily. As to quaternary structure, monomer. Zn(2+) serves as cofactor.

The protein localises to the cytoplasm. The enzyme catalyses tRNA(Ile) + L-isoleucine + ATP = L-isoleucyl-tRNA(Ile) + AMP + diphosphate. In terms of biological role, catalyzes the attachment of isoleucine to tRNA(Ile). As IleRS can inadvertently accommodate and process structurally similar amino acids such as valine, to avoid such errors it has two additional distinct tRNA(Ile)-dependent editing activities. One activity is designated as 'pretransfer' editing and involves the hydrolysis of activated Val-AMP. The other activity is designated 'posttransfer' editing and involves deacylation of mischarged Val-tRNA(Ile). This is Isoleucine--tRNA ligase from Bifidobacterium longum (strain NCC 2705).